Consider the following 401-residue polypeptide: MDIKKILAEVKRGCAELIDEERIENLIKNYYEKGENFFIKAGFDPTAPDLHLGHSVVLTKMAFLQKHGAIVQFLIGDFTGQIGDPSGKSATRKKLDKEQVLINAKTYKTQVFKVLDKEKTQIKFNSTWLNELGAAGIVELTSTFSVARMLERDDFTKRFKEQSPISICEFLYPLLQGYDSVALKSDIEMGGTDQKFNLLMGRQLQRVYNIGKEQAVIMMPLLEGLDGVNKMSKSLNNYIGVTEKANDMYAKILSISDELMFRYYELLSQKSLEEIAQIKKDIEQGNLHPKKAKENLALEITERFHSKEEANNAKSEFDRIHSQNALPSDMAEFEIQGKIWLAKALVECGLESSTSAARRSISANAVSVNSQKVSDEQMYLEQGEYILQIGKRKFAKLKVKE.

Residues 45 to 54 carry the 'HIGH' region motif; sequence PTAPDLHLGH. The short motif at 230–234 is the 'KMSKS' region element; sequence KMSKS. K233 is a binding site for ATP. The S4 RNA-binding domain maps to 339–399; the sequence is IWLAKALVEC…GKRKFAKLKV (61 aa).

The protein belongs to the class-I aminoacyl-tRNA synthetase family. TyrS type 2 subfamily. As to quaternary structure, homodimer.

The protein localises to the cytoplasm. The enzyme catalyses tRNA(Tyr) + L-tyrosine + ATP = L-tyrosyl-tRNA(Tyr) + AMP + diphosphate + H(+). Its function is as follows. Catalyzes the attachment of tyrosine to tRNA(Tyr) in a two-step reaction: tyrosine is first activated by ATP to form Tyr-AMP and then transferred to the acceptor end of tRNA(Tyr). This is Tyrosine--tRNA ligase from Campylobacter jejuni subsp. jejuni serotype O:2 (strain ATCC 700819 / NCTC 11168).